The primary structure comprises 269 residues: Glutamate 5-kinase 2 (269 aa).

Position 16 (Lys16) interacts with ATP. The substrate site is built by Ser57, Asp144, and Asn156. 218-224 (SGGMISK) serves as a coordination point for ATP.

The protein belongs to the glutamate 5-kinase family.

It is found in the cytoplasm. The catalysed reaction is L-glutamate + ATP = L-glutamyl 5-phosphate + ADP. Its pathway is amino-acid biosynthesis; L-proline biosynthesis; L-glutamate 5-semialdehyde from L-glutamate: step 1/2. Catalyzes the transfer of a phosphate group to glutamate to form L-glutamate 5-phosphate. The protein is Glutamate 5-kinase 2 of Rhizobium meliloti (strain 1021) (Ensifer meliloti).